The sequence spans 99 residues: Endothelin receptor type B (99 aa).

The Extracellular portion of the chain corresponds to 1 to 8 (PFGAEMCK). Cys-7 and Cys-88 form a disulfide bridge. The helical transmembrane segment at 9-30 (LVPFIQKASVGITVLSLCALSI) threads the bilayer. Over 31–51 (DRYRAVASWSRIKGIGIPKWT) the chain is Cytoplasmic. A helical transmembrane segment spans residues 52 to 76 (AVEIVLIWVVSVVLAVPEAIGFDMI). At 77 to 99 (TMDYKGSYLRICLLHPVQKTAFM) the chain is on the extracellular side.

This sequence belongs to the G-protein coupled receptor 1 family. Endothelin receptor subfamily. EDNRB sub-subfamily.

It localises to the cell membrane. In terms of biological role, non-specific receptor for endothelin 1, 2, and 3. Mediates its action by association with G proteins that activate a phosphatidylinositol-calcium second messenger system. The protein is Endothelin receptor type B (EDNRB) of Macaca fascicularis (Crab-eating macaque).